We begin with the raw amino-acid sequence, 321 residues long: Biotin synthase (321 aa).

Residues 44–270 (RGVRIHILNN…DAEVRAAGGR (227 aa)) form the Radical SAM core domain. Residues cysteine 59, cysteine 63, and cysteine 66 each coordinate [4Fe-4S] cluster. Residues cysteine 103, cysteine 135, cysteine 195, and arginine 265 each contribute to the [2Fe-2S] cluster site.

It belongs to the radical SAM superfamily. Biotin synthase family. As to quaternary structure, homodimer. It depends on [4Fe-4S] cluster as a cofactor. [2Fe-2S] cluster is required as a cofactor.

The catalysed reaction is (4R,5S)-dethiobiotin + (sulfur carrier)-SH + 2 reduced [2Fe-2S]-[ferredoxin] + 2 S-adenosyl-L-methionine = (sulfur carrier)-H + biotin + 2 5'-deoxyadenosine + 2 L-methionine + 2 oxidized [2Fe-2S]-[ferredoxin]. It functions in the pathway cofactor biosynthesis; biotin biosynthesis; biotin from 7,8-diaminononanoate: step 2/2. Its function is as follows. Catalyzes the conversion of dethiobiotin (DTB) to biotin by the insertion of a sulfur atom into dethiobiotin via a radical-based mechanism. The chain is Biotin synthase from Magnetococcus marinus (strain ATCC BAA-1437 / JCM 17883 / MC-1).